A 408-amino-acid chain; its full sequence is LL-diaminopimelate aminotransferase (408 aa).

Residues tyrosine 15 and glycine 42 each coordinate substrate. Pyridoxal 5'-phosphate is bound by residues tyrosine 72, 108–109, tyrosine 132, asparagine 187, tyrosine 218, and 246–248; these read SK and SFS. Substrate is bound by residues lysine 109, tyrosine 132, and asparagine 187. N6-(pyridoxal phosphate)lysine is present on lysine 249. Pyridoxal 5'-phosphate is bound by residues arginine 257 and asparagine 292. 2 residues coordinate substrate: asparagine 292 and arginine 388.

This sequence belongs to the class-I pyridoxal-phosphate-dependent aminotransferase family. LL-diaminopimelate aminotransferase subfamily. Homodimer. The cofactor is pyridoxal 5'-phosphate.

It carries out the reaction (2S,6S)-2,6-diaminopimelate + 2-oxoglutarate = (S)-2,3,4,5-tetrahydrodipicolinate + L-glutamate + H2O + H(+). It functions in the pathway amino-acid biosynthesis; L-lysine biosynthesis via DAP pathway; LL-2,6-diaminopimelate from (S)-tetrahydrodipicolinate (aminotransferase route): step 1/1. Functionally, involved in the synthesis of meso-diaminopimelate (m-DAP or DL-DAP), required for both lysine and peptidoglycan biosynthesis. Catalyzes the direct conversion of tetrahydrodipicolinate to LL-diaminopimelate. The polypeptide is LL-diaminopimelate aminotransferase (Prochlorococcus marinus (strain SARG / CCMP1375 / SS120)).